The primary structure comprises 198 residues: Nucleoid occlusion factor SlmA (198 aa).

Residues 10–70 enclose the HTH tetR-type domain; it reads NRREEILQSL…SLIEFIEDSL (61 aa). The H-T-H motif DNA-binding region spans 33–52; that stretch reads TTAKLAASVGVSEAALYRHF. The stretch at 117–144 forms a coiled coil; sequence EQDRLQGRINQLFERIEAQLRQVLREKR.

Belongs to the nucleoid occlusion factor SlmA family. In terms of assembly, homodimer. Interacts with FtsZ.

The protein localises to the cytoplasm. It is found in the nucleoid. In terms of biological role, required for nucleoid occlusion (NO) phenomenon, which prevents Z-ring formation and cell division over the nucleoid. Acts as a DNA-associated cell division inhibitor that binds simultaneously chromosomal DNA and FtsZ, and disrupts the assembly of FtsZ polymers. SlmA-DNA-binding sequences (SBS) are dispersed on non-Ter regions of the chromosome, preventing FtsZ polymerization at these regions. In Salmonella paratyphi A (strain ATCC 9150 / SARB42), this protein is Nucleoid occlusion factor SlmA.